The following is a 415-amino-acid chain: Serine hydroxymethyltransferase 2 (415 aa).

(6S)-5,6,7,8-tetrahydrofolate contacts are provided by residues Leu121 and 125–127 (GHL). Lys229 is modified (N6-(pyridoxal phosphate)lysine).

This sequence belongs to the SHMT family. As to quaternary structure, homodimer. It depends on pyridoxal 5'-phosphate as a cofactor.

It localises to the cytoplasm. It carries out the reaction (6R)-5,10-methylene-5,6,7,8-tetrahydrofolate + glycine + H2O = (6S)-5,6,7,8-tetrahydrofolate + L-serine. Its pathway is one-carbon metabolism; tetrahydrofolate interconversion. It participates in amino-acid biosynthesis; glycine biosynthesis; glycine from L-serine: step 1/1. Its function is as follows. Catalyzes the reversible interconversion of serine and glycine with tetrahydrofolate (THF) serving as the one-carbon carrier. This reaction serves as the major source of one-carbon groups required for the biosynthesis of purines, thymidylate, methionine, and other important biomolecules. Also exhibits THF-independent aldolase activity toward beta-hydroxyamino acids, producing glycine and aldehydes, via a retro-aldol mechanism. In Bordetella bronchiseptica (strain ATCC BAA-588 / NCTC 13252 / RB50) (Alcaligenes bronchisepticus), this protein is Serine hydroxymethyltransferase 2.